Consider the following 215-residue polypeptide: Probable transaldolase 1 (215 aa).

Lys83 serves as the catalytic Schiff-base intermediate with substrate.

This sequence belongs to the transaldolase family. Type 3B subfamily.

It localises to the cytoplasm. It catalyses the reaction D-sedoheptulose 7-phosphate + D-glyceraldehyde 3-phosphate = D-erythrose 4-phosphate + beta-D-fructose 6-phosphate. It participates in carbohydrate degradation; pentose phosphate pathway; D-glyceraldehyde 3-phosphate and beta-D-fructose 6-phosphate from D-ribose 5-phosphate and D-xylulose 5-phosphate (non-oxidative stage): step 2/3. Transaldolase is important for the balance of metabolites in the pentose-phosphate pathway. The chain is Probable transaldolase 1 from Bacillus cereus (strain ATCC 14579 / DSM 31 / CCUG 7414 / JCM 2152 / NBRC 15305 / NCIMB 9373 / NCTC 2599 / NRRL B-3711).